A 319-amino-acid chain; its full sequence is MQDTFSSPEHFTVLLREAVGGLALKENGIYIDGTFGRGGHSRFILSQLSKKGQLIAIDRDPQAIQVAQNIQDSRFRIVHDSFSAIPDICEKLGLTGKIDGILLDLGVSSPQLDNAERGFSFMKDGPLDMRMDTTQGLSATEWLRLVSEQDLAWVLKTFGEERFAKRIAQAIVGYNKSAVQSGAEPLNRTLQLAELIAQSVPFKDKYKHPATRSFQAIRIFINSELDELEKVLNGALNVLAPQGRLSIISFHSLEDRMVKHFIRKQSKGDDLPKGLPLREEQIQHNQKLKPVGKAIMPTEQEMAANVRSRSAVLRIAERI.

Residues 38–40 (GGH), aspartate 58, phenylalanine 82, aspartate 104, and glutamine 111 contribute to the S-adenosyl-L-methionine site.

The protein belongs to the methyltransferase superfamily. RsmH family.

It is found in the cytoplasm. It catalyses the reaction cytidine(1402) in 16S rRNA + S-adenosyl-L-methionine = N(4)-methylcytidine(1402) in 16S rRNA + S-adenosyl-L-homocysteine + H(+). Specifically methylates the N4 position of cytidine in position 1402 (C1402) of 16S rRNA. This is Ribosomal RNA small subunit methyltransferase H from Histophilus somni (strain 129Pt) (Haemophilus somnus).